The sequence spans 349 residues: N-acetyl-gamma-glutamyl-phosphate reductase (349 aa).

The active site involves C149.

Belongs to the NAGSA dehydrogenase family. Type 1 subfamily.

The protein resides in the cytoplasm. The catalysed reaction is N-acetyl-L-glutamate 5-semialdehyde + phosphate + NADP(+) = N-acetyl-L-glutamyl 5-phosphate + NADPH + H(+). It participates in amino-acid biosynthesis; L-arginine biosynthesis; N(2)-acetyl-L-ornithine from L-glutamate: step 3/4. Functionally, catalyzes the NADPH-dependent reduction of N-acetyl-5-glutamyl phosphate to yield N-acetyl-L-glutamate 5-semialdehyde. The polypeptide is N-acetyl-gamma-glutamyl-phosphate reductase (Acinetobacter baumannii (strain AB307-0294)).